The primary structure comprises 395 residues: [LysW]-aminoadipate semialdehyde transaminase (395 aa).

Residues 113–114 (GT) and Phe-140 contribute to the pyridoxal 5'-phosphate site. Arg-143 serves as a coordination point for substrate. Residue 225–228 (DEIQ) participates in pyridoxal 5'-phosphate binding. N6-(pyridoxal phosphate)lysine is present on Lys-254. Thr-282 serves as a coordination point for substrate. Pyridoxal 5'-phosphate is bound at residue Thr-283.

The protein belongs to the class-III pyridoxal-phosphate-dependent aminotransferase family. LysJ subfamily. As to quaternary structure, homodimer. Requires pyridoxal 5'-phosphate as cofactor.

Its subcellular location is the cytoplasm. It catalyses the reaction [amino-group carrier protein]-C-terminal-gamma-(L-lysyl)-L-glutamate + 2-oxoglutarate = [amino-group carrier protein]-C-terminal-N-(1-carboxy-5-oxopentan-1-yl)-L-glutamine + L-glutamate. The protein operates within amino-acid biosynthesis; L-lysine biosynthesis via AAA pathway; L-lysine from L-alpha-aminoadipate (Thermus route): step 4/5. Its function is as follows. Catalyzes the transfer of the amino group of L-glutamate to [LysW]-aminoadipate 6-semialdehyde, generating [LysW]-gamma-L-lysine. The sequence is that of [LysW]-aminoadipate semialdehyde transaminase from Thermus thermophilus (strain ATCC 27634 / DSM 579 / HB8).